A 216-amino-acid chain; its full sequence is Protein Syd (216 aa).

It belongs to the Syd family.

It is found in the cell inner membrane. Functionally, interacts with the SecY protein in vivo. May bind preferentially to an uncomplexed state of SecY, thus functioning either as a chelating agent for excess SecY in the cell or as a regulatory factor that negatively controls the translocase function. The polypeptide is Protein Syd (Shewanella sp. (strain W3-18-1)).